We begin with the raw amino-acid sequence, 226 residues long: Large ribosomal subunit protein uL1 (226 aa).

It belongs to the universal ribosomal protein uL1 family. Part of the 50S ribosomal subunit.

In terms of biological role, binds directly to 23S rRNA. The L1 stalk is quite mobile in the ribosome, and is involved in E site tRNA release. Protein L1 is also a translational repressor protein, it controls the translation of the L11 operon by binding to its mRNA. This chain is Large ribosomal subunit protein uL1, found in Borreliella burgdorferi (strain ATCC 35210 / DSM 4680 / CIP 102532 / B31) (Borrelia burgdorferi).